The primary structure comprises 767 residues: Ribonucleoside-diphosphate reductase subunit alpha (767 aa).

The disordered stretch occupies residues 1-30 (MHPTLISAPISSSANDAHAGTSQGSHQGHR). Over residues 9 to 26 (PISSSANDAHAGTSQGSH) the composition is skewed to polar residues. The 90-residue stretch at 31–120 (IQVIRRDGSS…VWSLWKDTLV (90 aa)) folds into the ATP-cone domain. Residues Thr-228, 243 to 244 (SC), Gly-272, 460 to 464 (NLCCE), and 631 to 635 (PNTSS) each bind substrate. Cysteines 244 and 478 form a disulfide. Catalysis depends on Asn-460, which acts as the Proton acceptor. Cys-462 acts as the Cysteine radical intermediate in catalysis. Glu-464 serves as the catalytic Proton acceptor.

Belongs to the ribonucleoside diphosphate reductase large chain family. Tetramer of two alpha and two beta subunits.

It catalyses the reaction a 2'-deoxyribonucleoside 5'-diphosphate + [thioredoxin]-disulfide + H2O = a ribonucleoside 5'-diphosphate + [thioredoxin]-dithiol. Under complex allosteric control mediated by deoxynucleoside triphosphates and ATP binding. The type of nucleotide bound at the specificity site determines substrate preference. It seems probable that ATP makes the enzyme reduce CDP and UDP, dGTP favors ADP reduction and dTTP favors GDP reduction. Its function is as follows. Provides the precursors necessary for DNA synthesis. Catalyzes the biosynthesis of deoxyribonucleotides from the corresponding ribonucleotides. This is Ribonucleoside-diphosphate reductase subunit alpha (nrdA) from Synechocystis sp. (strain ATCC 27184 / PCC 6803 / Kazusa).